A 549-amino-acid polypeptide reads, in one-letter code: MLSKRSLRVLKWGRCEAAYAAAYPKVPDWVLNFSPLPSLSSPHRDFSAFPAAQSEHMQQKMSENGAIPRQGKVLTVDTMNANVKKVDYAVRGPIVQRAVQIEKELKEGVKKPFDEVIKANIGDAHAMGQRPITFFRQVMALCTYPQLLDDNKFPEDAKNRARRILQSCGGNSIGAYTTSQGIDCVRQDVAKYIERRDGGIPSDPDNIYLTTGASDGIVTILKLLTAGEGLTRTGVMISIPQYPLYSASIAELGAVQINYYLNEEKCWSLDISELQRSLQAARKHCNPRVLCIINPGNPTGQVQSRQCIEDVIQFAAKENLFLMADEVYQDNVYAKGCEFHSFKKVLFEMGPEYSKKVELASFHSTSKCYMGECGFRGGYMEVINMDADVKAQLTKLVSVRLCPPAPGQALMDLVVNPPQPGEPSHQTFMQERTAVLSALAEKAKLTEQILNTVPGISCNPVQGAMYSFPRITLPERAISEAKAKGQAPDMFYCMKLLEETGICLVPGSGFGQREGTYHFRMTILPPTDKLKLMLNKLKDFHQRFTQQYS.

Lys-367 bears the N6-(pyridoxal phosphate)lysine mark.

Belongs to the class-I pyridoxal-phosphate-dependent aminotransferase family. Alanine aminotransferase subfamily. Homodimer. It depends on pyridoxal 5'-phosphate as a cofactor.

It carries out the reaction L-alanine + 2-oxoglutarate = pyruvate + L-glutamate. It functions in the pathway amino-acid degradation; L-alanine degradation via transaminase pathway; pyruvate from L-alanine: step 1/1. Catalyzes the reversible transamination between alanine and 2-oxoglutarate to form pyruvate and glutamate. The protein is Alanine aminotransferase 2-like (gpt2l) of Danio rerio (Zebrafish).